Reading from the N-terminus, the 390-residue chain is NADH-quinone oxidoreductase subunit D (390 aa).

It belongs to the complex I 49 kDa subunit family. As to quaternary structure, NDH-1 is composed of 14 different subunits. Subunits NuoB, C, D, E, F, and G constitute the peripheral sector of the complex.

The protein localises to the cell membrane. The catalysed reaction is a quinone + NADH + 5 H(+)(in) = a quinol + NAD(+) + 4 H(+)(out). Functionally, NDH-1 shuttles electrons from NADH, via FMN and iron-sulfur (Fe-S) centers, to quinones in the respiratory chain. The immediate electron acceptor for the enzyme in this species is believed to be ubiquinone. Couples the redox reaction to proton translocation (for every two electrons transferred, four hydrogen ions are translocated across the cytoplasmic membrane), and thus conserves the redox energy in a proton gradient. This Wolbachia sp. subsp. Brugia malayi (strain TRS) protein is NADH-quinone oxidoreductase subunit D.